The primary structure comprises 108 residues: Nucleoid-associated protein BMASAVP1_A1850 (108 aa).

A disordered region spans residues 84 to 108; that stretch reads EATSQEKMSGMTSGLPLPPGFKLPF. A compositionally biased stretch (polar residues) spans 85–95; it reads ATSQEKMSGMT. Residues 99-108 show a composition bias toward pro residues; sequence PLPPGFKLPF.

This sequence belongs to the YbaB/EbfC family. Homodimer.

Its subcellular location is the cytoplasm. The protein localises to the nucleoid. Functionally, binds to DNA and alters its conformation. May be involved in regulation of gene expression, nucleoid organization and DNA protection. The polypeptide is Nucleoid-associated protein BMASAVP1_A1850 (Burkholderia mallei (strain SAVP1)).